The primary structure comprises 464 residues: ATP synthase subunit beta (464 aa).

148–155 contacts ATP; the sequence is GGAGVGKT.

It belongs to the ATPase alpha/beta chains family. F-type ATPases have 2 components, CF(1) - the catalytic core - and CF(0) - the membrane proton channel. CF(1) has five subunits: alpha(3), beta(3), gamma(1), delta(1), epsilon(1). CF(0) has three main subunits: a(1), b(2) and c(9-12). The alpha and beta chains form an alternating ring which encloses part of the gamma chain. CF(1) is attached to CF(0) by a central stalk formed by the gamma and epsilon chains, while a peripheral stalk is formed by the delta and b chains.

It is found in the cell inner membrane. The enzyme catalyses ATP + H2O + 4 H(+)(in) = ADP + phosphate + 5 H(+)(out). Produces ATP from ADP in the presence of a proton gradient across the membrane. The catalytic sites are hosted primarily by the beta subunits. In Marinobacter nauticus (strain ATCC 700491 / DSM 11845 / VT8) (Marinobacter aquaeolei), this protein is ATP synthase subunit beta.